A 247-amino-acid polypeptide reads, in one-letter code: MKFIIAPAKKMIRAQDDFPVQSQPKYRAQAGELLLLMQQLTFSEAQALWHTSDKLTQTAYNQLQQSDLTRQQSPAIFSYSGIQYQYMAPDLLDDAGLVYIQQHLRILSGLYGILRPFDGVVPYRLEMQNHLRLPHHRNLYDFWGNRLYQALARMPGPIINLASDEYAKAIRPYLQAKDQFIDVRFAHRVNGQLKTRATYAKMARGEMIRFAASHRLTKAADLKNFDSPTYRFDSHLSTATQLVFIAK.

Belongs to the UPF0246 family.

This is UPF0246 protein LSEI_2080 from Lacticaseibacillus paracasei (strain ATCC 334 / BCRC 17002 / CCUG 31169 / CIP 107868 / KCTC 3260 / NRRL B-441) (Lactobacillus paracasei).